The sequence spans 471 residues: MSSLGTLGGARAGLGLLLGTAAGLGFLCALYSQRWKRTQRRGQSQSQSNSLDYTQTSEPGRQVRPLRAAPGEAGDAAVLSSLPRGQEVVLDRLEFVLTSLVALRREVEELRSSLQGLAGQIVGEVRSHMEENQKVARRRRFPFARERSDSTGSSSVYFTAASGATFTDAESEGGYTTANAESDYERDSERESDGDGEDEVSCETVKMGRKDSLDLEVEVALGLEPEAPEAGGSPGQEDVMPLLQQADELHQGSEQGKREGFQLLLNNKLVHGSRQDFLWRLARAYSDMCELTEEASEKRSYALSGKEEAEVALEKGNENAECHQWYAVLCGQLAEHEGIQRRIQSGFSFKEHVDKAIALKPENPMAHFLLGRWCYQVSHLSWLEKKTATALSESPLGATVQDALSSFLKAEELQPGFSKAGRIYICKCYKELGKNPEAKEWMKLALELPNVTKEDSAFQKDLEELEVILGE.

Residues 1–9 (MSSLGTLGG) lie on the Mitochondrial intermembrane side of the membrane. A helical membrane pass occupies residues 10 to 32 (ARAGLGLLLGTAAGLGFLCALYS). Residues 33-471 (QRWKRTQRRG…LEELEVILGE (439 aa)) are Cytoplasmic-facing. The interval 39–70 (QRRGQSQSQSNSLDYTQTSEPGRQVRPLRAAP) is disordered. Positions 41-50 (RGQSQSQSNS) are enriched in low complexity. A phosphoserine mark is found at Ser44, Ser46, Ser50, and Ser57. Positions 90 to 123 (LDRLEFVLTSLVALRREVEELRSSLQGLAGQIVG) form a coiled coil. The FFAT motif lies at 156–162 (VYFTAAS). Thr159 carries the post-translational modification Phosphothreonine. Residues 169–206 (AESEGGYTTANAESDYERDSERESDGDGEDEVSCETVK) form a disordered region. A phosphoserine mark is found at Ser182, Ser192, Ser212, and Ser233. Over residues 183–193 (DYERDSERESD) the composition is skewed to basic and acidic residues.

It belongs to the RMDN family. Interacts with PTPN2. Interacts with microtubules. Interacts with VAPB. Interacts (via FFAT motif) with MOSPD2 (via MSP domain). Interacts (via phosphorylated FFAT motif) with MOSPD2, VAPA and VAPB. Post-translationally, phosphorylation at Thr-160 of the FFAT motif activates interaction with MOSPD2, VAPA and VAPB.

The protein localises to the mitochondrion outer membrane. The protein resides in the cytoplasm. It is found in the nucleus. Its subcellular location is the cytoskeleton. It localises to the spindle. The protein localises to the spindle pole. Functionally, involved in cellular calcium homeostasis regulation. May participate in differentiation and apoptosis of keratinocytes. Overexpression induces apoptosis. In Bos taurus (Bovine), this protein is Regulator of microtubule dynamics protein 3.